A 273-amino-acid polypeptide reads, in one-letter code: Cytochrome b-c1 complex subunit Rieske, mitochondrial (273 aa).

The N-terminal 61 residues, 1–61 (MLRVAGRRLS…PFFVASRGFS (61 aa)), are a transit peptide targeting the mitochondrion. Positions 25 to 46 (PLAGAGVPDRDDDSARGRSQPR) are disordered. Over 62 to 110 (STETVVPRNQDAGLADLPATVAAVKNPNPKVVYDEYNHERYPPGDPSKR) the chain is Mitochondrial matrix. A helical membrane pass occupies residues 111 to 133 (AFAYFVLSGGRFIYASLLRLLVL). Residues 134–273 (KFVLSMSASK…FLEENKLLVG (140 aa)) lie on the Mitochondrial intermembrane side of the membrane. A Rieske domain is found at 176 to 271 (RRRTEDDIKL…YSFLEENKLL (96 aa)). Residues cysteine 216, histidine 218, cysteine 235, and histidine 238 each contribute to the [2Fe-2S] cluster site. Cysteines 221 and 237 form a disulfide.

This sequence belongs to the Rieske iron-sulfur protein family. In terms of assembly, component of the ubiquinol-cytochrome c oxidoreductase (cytochrome b-c1 complex, complex III, CIII), a multisubunit enzyme composed of 3 respiratory subunits cytochrome b, cytochrome c1 and Rieske protein, 2 core protein subunits, and several low-molecular weight protein subunits. The complex exists as an obligatory dimer and forms supercomplexes (SCs) in the inner mitochondrial membrane with cytochrome c oxidase (complex IV, CIV). It depends on [2Fe-2S] cluster as a cofactor.

The protein localises to the mitochondrion inner membrane. The catalysed reaction is a quinol + 2 Fe(III)-[cytochrome c](out) = a quinone + 2 Fe(II)-[cytochrome c](out) + 2 H(+)(out). Functionally, component of the ubiquinol-cytochrome c oxidoreductase, a multisubunit transmembrane complex that is part of the mitochondrial electron transport chain which drives oxidative phosphorylation. The respiratory chain contains 3 multisubunit complexes succinate dehydrogenase (complex II, CII), ubiquinol-cytochrome c oxidoreductase (cytochrome b-c1 complex, complex III, CIII) and cytochrome c oxidase (complex IV, CIV), that cooperate to transfer electrons derived from NADH and succinate to molecular oxygen, creating an electrochemical gradient over the inner membrane that drives transmembrane transport and the ATP synthase. The cytochrome b-c1 complex catalyzes electron transfer from ubiquinol to cytochrome c, linking this redox reaction to translocation of protons across the mitochondrial inner membrane, with protons being carried across the membrane as hydrogens on the quinol. In the process called Q cycle, 2 protons are consumed from the matrix, 4 protons are released into the intermembrane space and 2 electrons are passed to cytochrome c. The Rieske protein is a catalytic core subunit containing a [2Fe-2S] iron-sulfur cluster. It cycles between 2 conformational states during catalysis to transfer electrons from the quinol bound in the Q(0) site in cytochrome b to cytochrome c1. This is Cytochrome b-c1 complex subunit Rieske, mitochondrial from Zea mays (Maize).